A 441-amino-acid polypeptide reads, in one-letter code: Protein MONOCULM 1 (441 aa).

The segment at 1–33 (MLRSLHSSSSSDTDNNSGGCKNNGGGGGEAAAA) is disordered. Residues 7 to 20 (SSSSSDTDNNSGGC) are compositionally biased toward low complexity. Gly residues predominate over residues 21-33 (KNNGGGGGEAAAA). The GRAS domain occupies 41–437 (RAVAAAAPST…RPLLSVSAWQ (397 aa)). A leucine repeat I (LRI) region spans residues 48 to 126 (PSTRDLLLAC…GAARPASSGA (79 aa)). The tract at residues 127 to 195 (YLAFNQIAPF…LGPPEVRVTG (69 aa)) is VHIID. The VHIID signature appears at 158 to 162 (VHILD). Positions 205-256 (RTGNRLRAFARSIHLPFHFTPLLLSCATTAPHHVAGTSTGAAAAASTAAAAT) are leucine repeat II (LRII). The segment at 266-361 (LAVNCVMFLH…QEVLGREIEA (96 aa)) is PFYRE. Positions 364–437 (GPSGGRWWRG…RPLLSVSAWQ (74 aa)) are SAW.

It belongs to the GRAS family. As to expression, expressed in a small number of epidermal or subepidermal cells at the leaf axils, in axillary meristems and the entire tiller buds. Undetected in the shoot apical meristem.

It is found in the nucleus. In terms of biological role, putative transcription regulator that controls rice tillering by initiating axillary buds and promoting their outgrowth. Rice tiller is a specialized grain-bearing branch that is formed on the unelongated basal internode and grows independently of the mother stem (culm) by means of its own adventitious roots. The sequence is that of Protein MONOCULM 1 from Oryza sativa subsp. japonica (Rice).